A 512-amino-acid polypeptide reads, in one-letter code: MTKKFVGLTILDGLGLTDQKENNAFHLAKTPYLDYLLKNFPNTTLKASGEEVGLPQGQMGNSEVGHLNLGAGRVVYQSLTQINKAIRDKSFFTNKQFLQAIEHVKKNNSKMHLLGLISDGGIHSHLDHFKALFDLLKENNLANNTFLHAFTDGRDTSPHSGINYIKDLLDYGFNIASVVGRYYALDRDNNWNRINLVYNMLTSKQAPVIDLPLEDTIQNFYNQGITDEFITPFITNPNGLINDNDAVIFVNFRPDRAMRLATALSNPCATNAFCSEGKTNFCGTKLLNNLFLVTMTKYSAQVKSVVAFEKITLKNIYGEVIANLGMHQLRIAETEKYPHVTFFFDGGKELQLKNADRILIPSPKVKTYDLKPEMSALEITTHAKTAILSGKYDTLILNFANPDMVGHTGFLDATIKAIQTVDSCLKEVLNAIFAVKGKACIVADHGNAEQMTDNQGNPHTAHTTNLVPFIVTDKNVVLKPGSLCDVAPTMLDLLEIKKPQEMTGNSLIKKLV.

Residues D12 and S62 each contribute to the Mn(2+) site. S62 functions as the Phosphoserine intermediate in the catalytic mechanism. Substrate contacts are provided by residues H123, 154 to 155 (RD), R181, R187, 253 to 256 (RPDR), and K336. Positions 403, 407, 444, 445, and 462 each coordinate Mn(2+).

It belongs to the BPG-independent phosphoglycerate mutase family. Monomer. Mn(2+) is required as a cofactor.

The enzyme catalyses (2R)-2-phosphoglycerate = (2R)-3-phosphoglycerate. It participates in carbohydrate degradation; glycolysis; pyruvate from D-glyceraldehyde 3-phosphate: step 3/5. In terms of biological role, catalyzes the interconversion of 2-phosphoglycerate and 3-phosphoglycerate. The sequence is that of 2,3-bisphosphoglycerate-independent phosphoglycerate mutase from Onion yellows phytoplasma (strain OY-M).